The primary structure comprises 218 residues: Probable glutamine ABC transporter permease protein GlnP (218 aa).

3 helical membrane passes run 19–39 (FLVT…FGLI), 65–85 (LPLL…GIKL), and 188–208 (FFPI…SLSL). In terms of domain architecture, ABC transmembrane type-1 spans 19–210 (FLVTLYVAFI…AVNYSLSLAA (192 aa)).

Belongs to the binding-protein-dependent transport system permease family. As to quaternary structure, the complex is composed of two ATP-binding proteins (GlnQ), two transmembrane proteins (GlnM and GlnP) and a solute-binding protein (GlnH).

Its subcellular location is the cell membrane. Its function is as follows. Part of the ABC transporter complex GlnHMPQ involved in glutamine transport. Probably responsible for the translocation of the substrate across the membrane. The sequence is that of Probable glutamine ABC transporter permease protein GlnP (glnP) from Bacillus subtilis (strain 168).